The primary structure comprises 445 residues: T-box transcription factor TBX19 (445 aa).

A DNA-binding region (T-box) is located at residues 45–218; the sequence is LEDAPLWQRF…YNPFAKAFLD (174 aa).

Its subcellular location is the nucleus. Functionally, transcriptional regulator involved in developmental processes. Can activate POMC gene expression and repress the alpha glycoprotein subunit and thyroid-stimulating hormone beta promoters. The sequence is that of T-box transcription factor TBX19 from Canis lupus familiaris (Dog).